Here is a 712-residue protein sequence, read N- to C-terminus: Anaerobic ribonucleoside-triphosphate reductase (712 aa).

One can recognise an ATP-cone domain in the interval 3-92; that stretch reads PHVMKRDGCK…EYRHDRDIQR (90 aa). The region spanning 583 to 708 is the Glycine radical domain; the sequence is KKVNPYDKID…VKRRVKHLGN (126 aa). Zn(2+) is bound by residues Cys644, Cys647, Cys662, and Cys665. Gly681 is modified (glycine radical).

Belongs to the anaerobic ribonucleoside-triphosphate reductase family. In terms of assembly, forms a tetramer composed of two NrdD and two NrdG subunits.

The enzyme catalyses a ribonucleoside 5'-triphosphate + formate + H(+) = a 2'-deoxyribonucleoside 5'-triphosphate + CO2 + H2O. Activated under anaerobic conditions by NrdG, a tightly associated activase. Activation involves the formation of a glycyl radical at Gly-681. Functionally, catalyzes the conversion of ribonucleotides into deoxyribonucleotides, which are required for DNA synthesis and repair. This chain is Anaerobic ribonucleoside-triphosphate reductase (nrdD), found in Salmonella typhimurium (strain LT2 / SGSC1412 / ATCC 700720).